We begin with the raw amino-acid sequence, 132 residues long: N,N-dimethylformamidase alpha subunit (132 aa).

In terms of assembly, heterotetramer of two DmfA1 (alpha) and two DmfA2 (beta) subunits.

It catalyses the reaction N,N-dimethylformamide + H2O = dimethylamine + formate. With respect to regulation, activity is slightly inhibited by Mg(2+) and Mn(2+), and slightly increased by Cu(2+). Activity is slightly inhibited by the chelating agents 8-hydroxyquinoline, ethylenediaminetetraacetate, o-phenanthroline and 2,2'-bipyridyl. In terms of biological role, hydrolyzes N,N-dimethylformamide, and to a lesser extent N,N-dimethylacetamide and N,N-diethylacetamide. Has no activity against the substituted amides N-methylformamide, N-ethylformamide, N-ethylformamide and N-methylacetamide or the unsubstituted amides formamide, nicotinamide, acetoamide, benzamide, acetamide and acrylamide. This chain is N,N-dimethylformamidase alpha subunit, found in Alcaligenes sp.